The chain runs to 55 residues: Large ribosomal subunit protein bL33 (55 aa).

Belongs to the bacterial ribosomal protein bL33 family.

This chain is Large ribosomal subunit protein bL33, found in Xanthobacter autotrophicus (strain ATCC BAA-1158 / Py2).